A 545-amino-acid chain; its full sequence is MDNLRFVLFVFFIFLSFLLWEQWQIDYGPKPQAVAQTDGASRPAGDLPQRPSDDESDVTVHTEAPTQEGSRRIRVHTDVLSLEIDTRGGDLRQLDLLNYPVSKEQPDRPVRLLTDQGDIFVAQSGFIGAAQQVPNHHSLWQAEAGEYRLQDGQDILRVPLTWSDGQGVTVTKTYILRRGSYLIDMEQTIDNRSNTNWTGRQYMQLQRKEPTSAQEDSQFIRTYTGGVLHTEDKSYEKIAFKDMASGNLDAKSRQGWIAMIQHYFLAAWVPPAEDESTFYTKALADRVFVIGAYSPPAEVPAGSSQTLKARLFAGPKLQHVLEGIAPGLELTADFGILTVIAKPIYWLLETFHGFFNNWGWAIIFVTLVIKALFFKLSEASYRSMANMRKLQPKLVELKERYGEDRQRYNQAMMELYRKEKVNPLGGCLPILVQIPVFISLYWVLVESVDLRQAPFLLWLDDLSSKDPYFVLPLIMGVSMFIQQRLNPPPTDPIQARVMQFFPLVFTVFFLFFPSGLVLYWVVNNILSIIQQWYITRQIEKNTARA.

Residues 6–26 (FVLFVFFIFLSFLLWEQWQID) traverse the membrane as a helical segment. The interval 32 to 69 (QAVAQTDGASRPAGDLPQRPSDDESDVTVHTEAPTQEG) is disordered. The next 4 helical transmembrane spans lie at 354–374 (FFNN…ALFF), 425–445 (GGCL…WVLV), 462–482 (LSSK…MFIQ), and 500–520 (FFPL…VLYW).

Belongs to the OXA1/ALB3/YidC family. Type 1 subfamily. In terms of assembly, interacts with the Sec translocase complex via SecD. Specifically interacts with transmembrane segments of nascent integral membrane proteins during membrane integration.

Its subcellular location is the cell inner membrane. Its function is as follows. Required for the insertion and/or proper folding and/or complex formation of integral membrane proteins into the membrane. Involved in integration of membrane proteins that insert both dependently and independently of the Sec translocase complex, as well as at least some lipoproteins. Aids folding of multispanning membrane proteins. This Methylococcus capsulatus (strain ATCC 33009 / NCIMB 11132 / Bath) protein is Membrane protein insertase YidC.